A 122-amino-acid polypeptide reads, in one-letter code: Large ribosomal subunit protein uL14 (122 aa).

This sequence belongs to the universal ribosomal protein uL14 family. Part of the 50S ribosomal subunit. Forms a cluster with proteins L3 and L19. In the 70S ribosome, L14 and L19 interact and together make contacts with the 16S rRNA in bridges B5 and B8.

In terms of biological role, binds to 23S rRNA. Forms part of two intersubunit bridges in the 70S ribosome. The sequence is that of Large ribosomal subunit protein uL14 from Clostridium tetani (strain Massachusetts / E88).